Here is a 348-residue protein sequence, read N- to C-terminus: NADH-ubiquinone oxidoreductase chain 2 (348 aa).

10 helical membrane passes run 3 to 23 (PTVL…TFIG), 25 to 45 (HWLL…PLMI), 59 to 79 (YFIT…TNAW), 95 to 115 (ATLA…HFWL), 149 to 171 (LNSN…GGLN), 178 to 198 (ILAY…HYSP), 199 to 219 (SLTL…FLLF), 242 to 262 (VIAL…GFMP), 274 to 294 (SLII…FFYL), and 324 to 344 (LILL…PLIL).

Belongs to the complex I subunit 2 family.

The protein resides in the mitochondrion inner membrane. The enzyme catalyses a ubiquinone + NADH + 5 H(+)(in) = a ubiquinol + NAD(+) + 4 H(+)(out). In terms of biological role, core subunit of the mitochondrial membrane respiratory chain NADH dehydrogenase (Complex I) that is believed to belong to the minimal assembly required for catalysis. Complex I functions in the transfer of electrons from NADH to the respiratory chain. The immediate electron acceptor for the enzyme is believed to be ubiquinone. The polypeptide is NADH-ubiquinone oxidoreductase chain 2 (MT-ND2) (Scyliorhinus canicula (Small-spotted catshark)).